The following is a 435-amino-acid chain: Histone acetyltransferase ESA1 (435 aa).

Residues 22–73 (IIGCKCWVEKDGEQRLAEILSINNRRQPPKFYVHYEDFNKRLDEWILASRIN) enclose the Tudor-knot domain. The span at 78–89 (VTFPKPRDPDEK) shows a compositional bias: basic and acidic residues. The disordered stretch occupies residues 78–108 (VTFPKPRDPDEKKKKKQKKSATPQATDGETL). Residues 152–423 (SRVRNLSKII…IDPEKLIWKP (272 aa)) form the MYST-type HAT domain. Residues 185–210 (VYIDDFSLQYFGSKKQYARYRQKCTL) form a C2HC MYST-type; degenerate zinc finger. An ESA1-RPD3 motif motif is present at residues 235-256 (RTWCRNLCLLSKLFLDHKTLYY). An N6-acetyllysine; by autocatalysis modification is found at K252. Acetyl-CoA is bound by residues 293–297 (ACILT) and 302–308 (QRMGYGR). Residue E328 is the Proton donor/acceptor of the active site. S332 contributes to the acetyl-CoA binding site.

This sequence belongs to the MYST (SAS/MOZ) family. In terms of assembly, component of the NuA4 histone acetyltransferase complex. Interacts with arp4. Post-translationally, autoacetylation at Lys-252 is required for proper function.

Its subcellular location is the nucleus. The protein resides in the chromosome. It catalyses the reaction L-lysyl-[histone] + acetyl-CoA = N(6)-acetyl-L-lysyl-[histone] + CoA + H(+). It carries out the reaction L-lysyl-[protein] + acetyl-CoA = N(6)-acetyl-L-lysyl-[protein] + CoA + H(+). The catalysed reaction is 2-hydroxyisobutanoyl-CoA + L-lysyl-[protein] = N(6)-(2-hydroxyisobutanoyl)-L-lysyl-[protein] + CoA + H(+). The enzyme catalyses (2E)-butenoyl-CoA + L-lysyl-[protein] = N(6)-(2E)-butenoyl-L-lysyl-[protein] + CoA + H(+). Its function is as follows. Catalytic component of the NuA4 histone acetyltransferase (HAT) complex which is involved in epigenetic transcriptional activation of selected genes principally by acetylation of nucleosomal histones H4, H3, H2B, H2A and H2A variant H2A.Z. Acetylates histone H4 to form H4K5ac, H4K8ac, H4K12ac and H4K16ac, histone H3 to form H3K14ac, and histone H2A to form H2AK4ac and H2AK7ac. The NuA4 complex is involved in the DNA damage response and is required for chromosome segregation. The NuA4 complex plays a direct role in repair of DNA double-strand breaks (DSBs) through homologous recombination. Recruitment to promoters depends on H3K4me. Also acetylates non-histone proteins. In addition to protein acetyltransferase, can use different acyl-CoA substrates, such as 2-hydroxyisobutanoyl-CoA (2-hydroxyisobutyryl-CoA) or (2E)-butenoyl-CoA (crotonyl-CoA), and is able to mediate protein 2-hydroxyisobutyrylation and crotonylation, respectively. The sequence is that of Histone acetyltransferase ESA1 (ESA1) from Eremothecium gossypii (strain ATCC 10895 / CBS 109.51 / FGSC 9923 / NRRL Y-1056) (Yeast).